The sequence spans 217 residues: RING-H2 finger protein ATL40 (217 aa).

The chain crosses the membrane as a helical span at residues 28 to 48 (IFLVTTVSFSIIIIIVFVYYL). The RING-type; atypical zinc-finger motif lies at 100–142 (CAVCLSLLEEKDNARMLPNCKHVFHVSCVDTWLTTQSTCPVCR). 2 stretches are compositionally biased toward basic and acidic residues: residues 143–160 (TEAEPSHPRLEPEPREGP) and 186–217 (DSFRRILTRERSSNRRDHSRVDQDRELDIERQ). A disordered region spans residues 143–217 (TEAEPSHPRL…QDRELDIERQ (75 aa)).

This sequence belongs to the RING-type zinc finger family. ATL subfamily.

It localises to the membrane. The catalysed reaction is S-ubiquitinyl-[E2 ubiquitin-conjugating enzyme]-L-cysteine + [acceptor protein]-L-lysine = [E2 ubiquitin-conjugating enzyme]-L-cysteine + N(6)-ubiquitinyl-[acceptor protein]-L-lysine.. It functions in the pathway protein modification; protein ubiquitination. The polypeptide is RING-H2 finger protein ATL40 (ATL40) (Arabidopsis thaliana (Mouse-ear cress)).